The following is a 122-amino-acid chain: Large ribosomal subunit protein uL18 (122 aa).

This sequence belongs to the universal ribosomal protein uL18 family. Part of the 50S ribosomal subunit; part of the 5S rRNA/L5/L18/L25 subcomplex. Contacts the 5S and 23S rRNAs.

In terms of biological role, this is one of the proteins that bind and probably mediate the attachment of the 5S RNA into the large ribosomal subunit, where it forms part of the central protuberance. The sequence is that of Large ribosomal subunit protein uL18 from Synechococcus sp. (strain JA-3-3Ab) (Cyanobacteria bacterium Yellowstone A-Prime).